Consider the following 446-residue polypeptide: Glutamyl-tRNA reductase (446 aa).

Residues 49–52 (TCNR), serine 109, 114–116 (ETQ), and glutamine 120 contribute to the substrate site. Residue cysteine 50 is the Nucleophile of the active site. 189–194 (GAGETG) contributes to the NADP(+) binding site.

The protein belongs to the glutamyl-tRNA reductase family. As to quaternary structure, homodimer.

The catalysed reaction is (S)-4-amino-5-oxopentanoate + tRNA(Glu) + NADP(+) = L-glutamyl-tRNA(Glu) + NADPH + H(+). The protein operates within porphyrin-containing compound metabolism; protoporphyrin-IX biosynthesis; 5-aminolevulinate from L-glutamyl-tRNA(Glu): step 1/2. Catalyzes the NADPH-dependent reduction of glutamyl-tRNA(Glu) to glutamate 1-semialdehyde (GSA). This chain is Glutamyl-tRNA reductase, found in Exiguobacterium sibiricum (strain DSM 17290 / CCUG 55495 / CIP 109462 / JCM 13490 / 255-15).